The chain runs to 57 residues: Small nuclear protein PRAC1 (57 aa).

The segment at 38-57 (RSDGSACNSGISGGRGRKIP) is disordered.

In terms of tissue distribution, highly expressed in prostate, rectum, and distal colon, and weakly expressed in bladder. Expressed in prostate cancer cell lines.

The protein localises to the nucleus. This is Small nuclear protein PRAC1 (PRAC1) from Homo sapiens (Human).